Here is a 552-residue protein sequence, read N- to C-terminus: Transcription factor lcsF (552 aa).

Disordered regions lie at residues 1 to 132 (MAPA…DLDP), 169 to 209 (TSSY…ASLS), 232 to 258 (EATS…HWSS), and 297 to 349 (ELTS…QHGA). Positions 31–55 (KDRKEKKRIQNRVAQRSYRSRMKAR) are basic motif. The bZIP domain maps to 31-76 (KDRKEKKRIQNRVAQRSYRSRMKARLGELQSRLQAHEEQKAKEEAE). Positions 56 to 63 (LGELQSRL) are leucine-zipper. The segment covering 64-79 (QAHEEQKAKEEAERCD) has biased composition (basic and acidic residues). Polar residues-rich tracts occupy residues 98–119 (TPPS…NSAS) and 169–186 (TSSY…SLSQ). Residues 298 to 347 (LTSTGDLPNATWRPSQQFSGPETTPRSHNAENPTQQQSPINDDTPSTTQH) show a composition bias toward polar residues.

This sequence belongs to the bZIP family.

The protein localises to the nucleus. In terms of biological role, transcription factor that regulates the expression of the gene cluster that mediates the biosynthesis of the lipopeptide antibiotics leucinostatins that show extensive biological activities, including antimalarial, antiviral, antibacterial, antifungal, and antitumor activities, as well as phytotoxic. All 20 genes in the cluster are up-regulated to some extent by lcsF, with the exception of lcsL and lcsP, which are down-regulated. The protein is Transcription factor lcsF of Purpureocillium lilacinum (Paecilomyces lilacinus).